A 173-amino-acid chain; its full sequence is MSNLYESIRKYKCGYIEEILNILDMFDPLLNKFQRNSCYEDMKSELSLFMFNLIDNFPLEKDCFKEDKFIINYIYKSLKNKFIQVNKLHQKVKSYETNIDIIWVNNCDYANLLSTVIFEDIIKDLTQNEKNILRKIYLHGLRESEISRELNISRQAVNKTHLRALEKLKKLIN.

A sigma-70 factor domain-4 region spans residues 122 to 169 (IKDLTQNEKNILRKIYLHGLRESEISRELNISRQAVNKTHLRALEKLK). Residues 143–162 (ESEISRELNISRQAVNKTHL) constitute a DNA-binding region (H-T-H motif).

It belongs to the sigma-70 factor family.

Its function is as follows. Sigma factors are initiation factors that promote the attachment of RNA polymerase to specific initiation sites and are then released. Transcriptional regulator specifically required to activate expression of the toxin gene locus, composed of tcsL and tcdE/utxA. The polypeptide is RNA polymerase sigma factor TcsR (Paraclostridium sordellii (Clostridium sordellii)).